Reading from the N-terminus, the 245-residue chain is Exosome complex component RRP41 (245 aa).

Ala2 bears the N-acetylalanine mark.

This sequence belongs to the RNase PH family. In terms of assembly, component of the RNA exosome core complex (Exo-9), composed of EXOSC1, EXOSC2, EXOSC3, EXOSC4, EXOSC5, EXOSC6, EXOSC7, EXOSC8 and EXOSC9; within the complex interacts with EXOSC2, EXOSC7 and EXOSC9. The catalytically inactive RNA exosome core complex (Exo-9) associates with the catalytic subunit EXOSC10/RRP6. Exo-9 may associate with DIS3 to form the nucleolar exosome complex, or DIS3L to form the cytoplasmic exosome complex. Exo-9 is formed by a hexameric base ring consisting of the heterodimers EXOSC4-EXOSC9, EXOSC5-EXOSC8 and EXOSC6-EXOSC7, and a cap ring consisting of EXOSC1, EXOSC2 and EXOSC3. The RNA exosome complex associates with cofactors C1D/RRP47, MPHOSPH6/MPP6 and MTREX/MTR4. Interacts with DDX60. Interacts with DIS3; the interaction is direct.

Its subcellular location is the cytoplasm. It localises to the nucleus. It is found in the nucleolus. The protein localises to the nucleoplasm. Non-catalytic component of the RNA exosome complex which has 3'-&gt;5' exoribonuclease activity and participates in a multitude of cellular RNA processing and degradation events. In the nucleus, the RNA exosome complex is involved in proper maturation of stable RNA species such as rRNA, snRNA and snoRNA, in the elimination of RNA processing by-products and non-coding 'pervasive' transcripts, such as antisense RNA species and promoter-upstream transcripts (PROMPTs), and of mRNAs with processing defects, thereby limiting or excluding their export to the cytoplasm. The RNA exosome may be involved in Ig class switch recombination (CSR) and/or Ig variable region somatic hypermutation (SHM) by targeting AICDA deamination activity to transcribed dsDNA substrates. In the cytoplasm, the RNA exosome complex is involved in general mRNA turnover and specifically degrades inherently unstable mRNAs containing AU-rich elements (AREs) within their 3' untranslated regions, and in RNA surveillance pathways, preventing translation of aberrant mRNAs. It seems to be involved in degradation of histone mRNA. The catalytic inactive RNA exosome core complex of 9 subunits (Exo-9) is proposed to play a pivotal role in the binding and presentation of RNA for ribonucleolysis, and to serve as a scaffold for the association with catalytic subunits and accessory proteins or complexes. EXOSC4 binds to ARE-containing RNAs. The sequence is that of Exosome complex component RRP41 (EXOSC4) from Bos taurus (Bovine).